An 830-amino-acid chain; its full sequence is Leucine--tRNA ligase (830 aa).

A 'HIGH' region motif is present at residues 34–44 (PYPSGNIHMGH). Positions 592-596 (KMSKS) match the 'KMSKS' region motif. K595 provides a ligand contact to ATP.

This sequence belongs to the class-I aminoacyl-tRNA synthetase family.

Its subcellular location is the cytoplasm. It catalyses the reaction tRNA(Leu) + L-leucine + ATP = L-leucyl-tRNA(Leu) + AMP + diphosphate. The sequence is that of Leucine--tRNA ligase from Ehrlichia ruminantium (strain Welgevonden).